The sequence spans 183 residues: Ribosome-recycling factor (183 aa).

This sequence belongs to the RRF family.

Its subcellular location is the cytoplasm. Its function is as follows. Responsible for the release of ribosomes from messenger RNA at the termination of protein biosynthesis. May increase the efficiency of translation by recycling ribosomes from one round of translation to another. This is Ribosome-recycling factor from Bifidobacterium longum subsp. infantis (strain ATCC 15697 / DSM 20088 / JCM 1222 / NCTC 11817 / S12).